The sequence spans 319 residues: Aspartate carbamoyltransferase catalytic subunit (319 aa).

Residues Arg65 and Thr66 each contribute to the carbamoyl phosphate site. Lys93 serves as a coordination point for L-aspartate. Residues Arg115, His149, and Gln152 each coordinate carbamoyl phosphate. The L-aspartate site is built by Arg182 and Arg237. Gly278 and Pro279 together coordinate carbamoyl phosphate.

The protein belongs to the aspartate/ornithine carbamoyltransferase superfamily. ATCase family. Heterododecamer (2C3:3R2) of six catalytic PyrB chains organized as two trimers (C3), and six regulatory PyrI chains organized as three dimers (R2).

It catalyses the reaction carbamoyl phosphate + L-aspartate = N-carbamoyl-L-aspartate + phosphate + H(+). Its pathway is pyrimidine metabolism; UMP biosynthesis via de novo pathway; (S)-dihydroorotate from bicarbonate: step 2/3. In terms of biological role, catalyzes the condensation of carbamoyl phosphate and aspartate to form carbamoyl aspartate and inorganic phosphate, the committed step in the de novo pyrimidine nucleotide biosynthesis pathway. The protein is Aspartate carbamoyltransferase catalytic subunit of Dechloromonas aromatica (strain RCB).